We begin with the raw amino-acid sequence, 166 residues long: Large ribosomal subunit protein uL10 (166 aa).

It belongs to the universal ribosomal protein uL10 family. As to quaternary structure, part of the ribosomal stalk of the 50S ribosomal subunit. The N-terminus interacts with L11 and the large rRNA to form the base of the stalk. The C-terminus forms an elongated spine to which L12 dimers bind in a sequential fashion forming a multimeric L10(L12)X complex.

Forms part of the ribosomal stalk, playing a central role in the interaction of the ribosome with GTP-bound translation factors. This chain is Large ribosomal subunit protein uL10 (rplJ), found in Streptococcus pyogenes serotype M18 (strain MGAS8232).